Here is a 170-residue protein sequence, read N- to C-terminus: Peptidyl-prolyl cis-trans isomerase ESS1 (170 aa).

The WW domain occupies T9 to G43. The segment at N30 to L53 is disordered. Residues E32–L53 are compositionally biased toward basic and acidic residues. In terms of domain architecture, PpiC spans P57–G170. S161 is subject to Phosphoserine.

It belongs to the PpiC/parvulin rotamase family. As to quaternary structure, interacts with the RNA polymerase II largest subunit (RPB1) and with the SIN1-RDP3 HDAC subunit SIN3.

Its subcellular location is the cytoplasm. It localises to the nucleus. It catalyses the reaction [protein]-peptidylproline (omega=180) = [protein]-peptidylproline (omega=0). Inhibited by 5-hydroxy-1,4-naphthoquinone (juglone), but not by FK506 or cyclosporin A. Essential PPIase specific for phosphoserine and phosphothreonine N-terminal to the proline residue. Required for efficient pre-mRNA 3'-end processing and transcription termination, probably by inducing conformational changes by proline-directed isomerization in the C-terminal domain (CTD) of RPB1, thereby altering cofactor binding with the RNA polymerase II transcription complex. Also targets the SIN3-RPD3 histone deacetylase complex (HDAC). This Saccharomyces cerevisiae (strain ATCC 204508 / S288c) (Baker's yeast) protein is Peptidyl-prolyl cis-trans isomerase ESS1 (ESS1).